Reading from the N-terminus, the 330-residue chain is Malate dehydrogenase (330 aa).

G15–A21 lines the NAD(+) pocket. Substrate is bound by residues R96 and R102. NAD(+) is bound by residues N109, Q116, and V133–N135. The substrate site is built by N135 and R166. Catalysis depends on H191, which acts as the Proton acceptor.

This sequence belongs to the LDH/MDH superfamily. MDH type 2 family.

The enzyme catalyses (S)-malate + NAD(+) = oxaloacetate + NADH + H(+). Its function is as follows. Catalyzes the reversible oxidation of malate to oxaloacetate. This Chlamydia caviae (strain ATCC VR-813 / DSM 19441 / 03DC25 / GPIC) (Chlamydophila caviae) protein is Malate dehydrogenase.